The sequence spans 269 residues: Energy-coupling factor transporter ATP-binding protein EcfA1 (269 aa).

Residues 8 to 242 (IEFKDVSFQY…EEALISVGLD (235 aa)) form the ABC transporter domain. Residue 42–49 (GHNGSGKS) participates in ATP binding.

It belongs to the ABC transporter superfamily. Energy-coupling factor EcfA family. As to quaternary structure, forms a stable energy-coupling factor (ECF) transporter complex composed of 2 membrane-embedded substrate-binding proteins (S component), 2 ATP-binding proteins (A component) and 2 transmembrane proteins (T component).

It is found in the cell membrane. In terms of biological role, ATP-binding (A) component of a common energy-coupling factor (ECF) ABC-transporter complex. Unlike classic ABC transporters this ECF transporter provides the energy necessary to transport a number of different substrates. The chain is Energy-coupling factor transporter ATP-binding protein EcfA1 from Staphylococcus epidermidis (strain ATCC 35984 / DSM 28319 / BCRC 17069 / CCUG 31568 / BM 3577 / RP62A).